A 366-amino-acid chain; its full sequence is Holliday junction branch migration complex subunit RuvB (366 aa).

A large ATPase domain (RuvB-L) region spans residues 3 to 183; sequence ADGLVSAAAS…FGFTAHLDFY (181 aa). ATP-binding positions include leucine 22, arginine 23, glycine 64, lysine 67, threonine 68, serine 69, 130–132, arginine 173, tyrosine 183, and arginine 220; that span reads EDF. Mg(2+) is bound at residue threonine 68. A small ATPAse domain (RuvB-S) region spans residues 184–254; it reads APDELARVLT…VARAALRIYD (71 aa). Residues 257–366 are head domain (RuvB-H); that stretch reads GLGLDRLDRA…PEDGLHPGGG (110 aa). Positions 312 and 317 each coordinate DNA.

This sequence belongs to the RuvB family. In terms of assembly, homohexamer. Forms an RuvA(8)-RuvB(12)-Holliday junction (HJ) complex. HJ DNA is sandwiched between 2 RuvA tetramers; dsDNA enters through RuvA and exits via RuvB. An RuvB hexamer assembles on each DNA strand where it exits the tetramer. Each RuvB hexamer is contacted by two RuvA subunits (via domain III) on 2 adjacent RuvB subunits; this complex drives branch migration. In the full resolvosome a probable DNA-RuvA(4)-RuvB(12)-RuvC(2) complex forms which resolves the HJ.

It is found in the cytoplasm. It carries out the reaction ATP + H2O = ADP + phosphate + H(+). Its function is as follows. The RuvA-RuvB-RuvC complex processes Holliday junction (HJ) DNA during genetic recombination and DNA repair, while the RuvA-RuvB complex plays an important role in the rescue of blocked DNA replication forks via replication fork reversal (RFR). RuvA specifically binds to HJ cruciform DNA, conferring on it an open structure. The RuvB hexamer acts as an ATP-dependent pump, pulling dsDNA into and through the RuvAB complex. RuvB forms 2 homohexamers on either side of HJ DNA bound by 1 or 2 RuvA tetramers; 4 subunits per hexamer contact DNA at a time. Coordinated motions by a converter formed by DNA-disengaged RuvB subunits stimulates ATP hydrolysis and nucleotide exchange. Immobilization of the converter enables RuvB to convert the ATP-contained energy into a lever motion, pulling 2 nucleotides of DNA out of the RuvA tetramer per ATP hydrolyzed, thus driving DNA branch migration. The RuvB motors rotate together with the DNA substrate, which together with the progressing nucleotide cycle form the mechanistic basis for DNA recombination by continuous HJ branch migration. Branch migration allows RuvC to scan DNA until it finds its consensus sequence, where it cleaves and resolves cruciform DNA. In Frankia alni (strain DSM 45986 / CECT 9034 / ACN14a), this protein is Holliday junction branch migration complex subunit RuvB.